The primary structure comprises 394 residues: Flap endonuclease 1 (394 aa).

Residues 1-103 (MGIKSLYQII…GELAKRTMRK (103 aa)) are N-domain. Aspartate 34 provides a ligand contact to Mg(2+). Arginine 69 lines the DNA pocket. A Mg(2+)-binding site is contributed by aspartate 85. The tract at residues 102–123 (RKAEAQEAAEEAKETGTAEDVE) is disordered. The I-domain stretch occupies residues 121–252 (DVEKFSRRTV…NTALKMIRDH (132 aa)). The Mg(2+) site is built by glutamate 157, glutamate 159, aspartate 178, and aspartate 180. Glutamate 157 is a binding site for DNA. The DNA site is built by glycine 230 and aspartate 232. A Mg(2+)-binding site is contributed by aspartate 232. The tract at residues 340 to 348 (QQSRLEGFF) is interaction with PCNA. The segment at 349–394 (KPVAKTEQQKATAKRKAEEKAELAKKKKKEDAKAKRAMGAKPRGAR) is disordered. Basic and acidic residues predominate over residues 363 to 382 (RKAEEKAELAKKKKKEDAKA). The span at 383 to 394 (KRAMGAKPRGAR) shows a compositional bias: basic residues.

The protein belongs to the XPG/RAD2 endonuclease family. FEN1 subfamily. As to quaternary structure, interacts with PCNA. Three molecules of FEN1 bind to one PCNA trimer with each molecule binding to one PCNA monomer. PCNA stimulates the nuclease activity without altering cleavage specificity. The cofactor is Mg(2+). Phosphorylated. Phosphorylation upon DNA damage induces relocalization to the nuclear plasma.

The protein localises to the nucleus. It is found in the nucleolus. The protein resides in the nucleoplasm. Its subcellular location is the mitochondrion. Functionally, structure-specific nuclease with 5'-flap endonuclease and 5'-3' exonuclease activities involved in DNA replication and repair. During DNA replication, cleaves the 5'-overhanging flap structure that is generated by displacement synthesis when DNA polymerase encounters the 5'-end of a downstream Okazaki fragment. It enters the flap from the 5'-end and then tracks to cleave the flap base, leaving a nick for ligation. Also involved in the long patch base excision repair (LP-BER) pathway, by cleaving within the apurinic/apyrimidinic (AP) site-terminated flap. Acts as a genome stabilization factor that prevents flaps from equilibrating into structures that lead to duplications and deletions. Also possesses 5'-3' exonuclease activity on nicked or gapped double-stranded DNA, and exhibits RNase H activity. Also involved in replication and repair of rDNA and in repairing mitochondrial DNA. This is Flap endonuclease 1 from Arthroderma otae (strain ATCC MYA-4605 / CBS 113480) (Microsporum canis).